Here is a 236-residue protein sequence, read N- to C-terminus: LexA repressor (236 aa).

Residues F26–T46 constitute a DNA-binding region (H-T-H motif). Residues P85–R109 are disordered. Catalysis depends on for autocatalytic cleavage activity residues S157 and K195.

The protein belongs to the peptidase S24 family. As to quaternary structure, homodimer.

The catalysed reaction is Hydrolysis of Ala-|-Gly bond in repressor LexA.. Represses a number of genes involved in the response to DNA damage (SOS response), including recA and lexA. In the presence of single-stranded DNA, RecA interacts with LexA causing an autocatalytic cleavage which disrupts the DNA-binding part of LexA, leading to derepression of the SOS regulon and eventually DNA repair. This Rhodopseudomonas palustris (strain ATCC BAA-98 / CGA009) protein is LexA repressor.